Here is a 1296-residue protein sequence, read N- to C-terminus: Histone-lysine N-methyltransferase EHMT1 (1296 aa).

2 disordered regions span residues 1-111 (MAAA…NHVT) and 170-200 (PQTP…TDVR). N-acetylalanine is present on Ala-2. Positions 14–31 (QETKQDCCMKTELLREDT) are enriched in basic and acidic residues. Residue Lys-23 forms a Glycyl lysine isopeptide (Lys-Gly) (interchain with G-Cter in SUMO1); alternate linkage. A Glycyl lysine isopeptide (Lys-Gly) (interchain with G-Cter in SUMO2); alternate cross-link involves residue Lys-23. The segment covering 77–89 (NTRASPQEGTNRV) has biased composition (polar residues). Residues 97 to 106 (VSERDTEVGK) are compositionally biased toward basic and acidic residues. Glycyl lysine isopeptide (Lys-Gly) (interchain with G-Cter in SUMO2) cross-links involve residues Lys-191, Lys-229, Lys-232, Lys-315, and Lys-325. Residues 341 to 470 (SLEMDSEDED…SSPGSMEQAA (130 aa)) form a disordered region. Acidic residues predominate over residues 342 to 360 (LEMDSEDEDSDELEDDEDH). A compositionally biased stretch (basic and acidic residues) spans 371 to 391 (EDSRTSKESMSETDRAAKMDG). A compositionally biased stretch (acidic residues) spans 392 to 414 (DSEEEQESPDTGEDEDGGDESDL). Residue Lys-430 forms a Glycyl lysine isopeptide (Lys-Gly) (interchain with G-Cter in SUMO2) linkage. Ser-433 carries the post-translational modification Phosphoserine. Residues 438-450 (PARKRRRRSRKKP) show a composition bias toward basic residues. The residue at position 481 (Ser-481) is a Phosphoserine. Residues Lys-559, Lys-644, Lys-659, and Lys-729 each participate in a glycyl lysine isopeptide (Lys-Gly) (interchain with G-Cter in SUMO2) cross-link. Positions 653-714 (LAPGQEKSLA…PTSGLSQGPG (62 aa)) are disordered. ANK repeat units follow at residues 735–764 (FHPK…DPNF), 770–799 (SKRS…NIDT), 803–832 (DQRT…QVDP), 836–866 (EGST…DVNC), 870–899 (GGWT…DINI), 903–932 (EENI…DLHA), 936–965 (HGDS…DVTL), and 969–1002 (EGET…DKPV). Residues 903-905 (EEN) are histone H3K9me binding. Ser-1046 is modified (phosphoserine). Residues 1058–1121 (QYCVCVDDCS…NCRNRVVQNG (64 aa)) form the Pre-SET domain. Residues Cys-1060, Cys-1062, Cys-1066, Cys-1071, Cys-1073, Cys-1103, Cys-1107, Cys-1109, and Cys-1113 each contribute to the Zn(2+) site. Residues 1124–1241 (ARLQLYRTQD…AGEQLGFDYG (118 aa)) enclose the SET domain. S-adenosyl-L-methionine-binding positions include 1134–1136 (MGW), Tyr-1171, and 1198–1199 (NH). The segment at 1160–1179 (DSEADVREEDSYLFDLDNKD) is interaction with histone H3. Cys-1201 is a binding site for Zn(2+). An interaction with histone H3 region spans residues 1240 to 1243 (YGER). Residue Cys-1254 coordinates Zn(2+). Arg-1255 contacts S-adenosyl-L-methionine. The Zn(2+) site is built by Cys-1256 and Cys-1261. The tract at residues 1271–1296 (RQASAAQEPQENGLPDTSSAAAADPL) is disordered.

It belongs to the class V-like SAM-binding methyltransferase superfamily. As to quaternary structure, interacts with WIZ. Part of the E2F6.com-1 complex in G0 phase composed of E2F6, MGA, MAX, TFDP1, CBX3, BAT8, EHMT1, RING1, RNF2, MBLR, L3MBTL2 and YAF2. Interacts with MPHOSPH8. Interacts with CDYL. Interacts with REST only in the presence of CDYL. Part of a complex containing at least CDYL, REST, WIZ, SETB1, EHMT1 and EHMT2. Heterodimer; heterodimerizes with EHMT2. Interacts (via ANK repeats) with RELA (when monomethylated at 'Lys-310'). Interacts with Baz2b. Ubiquitous.

The protein resides in the nucleus. It is found in the chromosome. The enzyme catalyses N(6)-methyl-L-lysyl(9)-[histone H3] + S-adenosyl-L-methionine = N(6),N(6)-dimethyl-L-lysyl(9)-[histone H3] + S-adenosyl-L-homocysteine + H(+). It catalyses the reaction L-lysyl(9)-[histone H3] + S-adenosyl-L-methionine = N(6)-methyl-L-lysyl(9)-[histone H3] + S-adenosyl-L-homocysteine + H(+). Methyltransferase activity is inhibited by BIX-01294. Efficiently inhibited by compound E72, a BIX-01294 derivative in which the diazepane ring and the benzyl are replaced with a 3-dimethylaminopropyl and a 5-aminopentyl group at sites B and C, respectively. Histone methyltransferase that specifically mono- and dimethylates 'Lys-9' of histone H3 (H3K9me1 and H3K9me2, respectively) in euchromatin. H3K9me represents a specific tag for epigenetic transcriptional repression by recruiting HP1 proteins to methylated histones. Also weakly methylates 'Lys-27' of histone H3 (H3K27me). Also required for DNA methylation, the histone methyltransferase activity is not required for DNA methylation, suggesting that these 2 activities function independently. Probably targeted to histone H3 by different DNA-binding proteins like E2F6, MGA, MAX and/or DP1. During G0 phase, it probably contributes to silencing of MYC- and E2F-responsive genes, suggesting a role in G0/G1 transition in cell cycle. In addition to the histone methyltransferase activity, also methylates non-histone proteins: mediates dimethylation of 'Lys-373' of p53/TP53. Represses the expression of mitochondrial function-related genes, perhaps by occupying their promoter regions, working in concert with probable chromatin reader Baz2b. This chain is Histone-lysine N-methyltransferase EHMT1 (Ehmt1), found in Mus musculus (Mouse).